The sequence spans 518 residues: Glutamate--cysteine ligase (518 aa).

The protein belongs to the glutamate--cysteine ligase type 1 family. Type 1 subfamily.

The catalysed reaction is L-cysteine + L-glutamate + ATP = gamma-L-glutamyl-L-cysteine + ADP + phosphate + H(+). It participates in sulfur metabolism; glutathione biosynthesis; glutathione from L-cysteine and L-glutamate: step 1/2. In Cronobacter sakazakii (strain ATCC BAA-894) (Enterobacter sakazakii), this protein is Glutamate--cysteine ligase.